Reading from the N-terminus, the 246-residue chain is Isoprenyl transferase (246 aa).

The active site involves D18. Residue D18 participates in Mg(2+) binding. Substrate contacts are provided by residues G19–R22, W23, R31, H35, and S63–E65. The active-site Proton acceptor is N66. Substrate contacts are provided by residues W67, R69, R186, and R192–S194. E205 serves as a coordination point for Mg(2+).

The protein belongs to the UPP synthase family. As to quaternary structure, homodimer. It depends on Mg(2+) as a cofactor.

Functionally, catalyzes the condensation of isopentenyl diphosphate (IPP) with allylic pyrophosphates generating different type of terpenoids. This is Isoprenyl transferase from Geobacter sulfurreducens (strain ATCC 51573 / DSM 12127 / PCA).